Consider the following 89-residue polypeptide: Small ribosomal subunit protein uS15 (89 aa).

Belongs to the universal ribosomal protein uS15 family. Part of the 30S ribosomal subunit. Forms a bridge to the 50S subunit in the 70S ribosome, contacting the 23S rRNA.

One of the primary rRNA binding proteins, it binds directly to 16S rRNA where it helps nucleate assembly of the platform of the 30S subunit by binding and bridging several RNA helices of the 16S rRNA. Functionally, forms an intersubunit bridge (bridge B4) with the 23S rRNA of the 50S subunit in the ribosome. This chain is Small ribosomal subunit protein uS15, found in Cereibacter sphaeroides (strain ATCC 17025 / ATH 2.4.3) (Rhodobacter sphaeroides).